The chain runs to 660 residues: Bifunctional polymyxin resistance protein ArnA (660 aa).

The formyltransferase ArnAFT stretch occupies residues 1 to 304; that stretch reads MKAVIFAYHD…TLGLVAGARL (304 aa). The active-site Proton donor; for formyltransferase activity is His104. Residues Arg114 and 136-140 each bind (6R)-10-formyltetrahydrofolate; that span reads VKRAD. A dehydrogenase ArnADH region spans residues 314–660; it reads RRIRVLILGV…RSVDVAERAS (347 aa). NAD(+) is bound by residues Asp347 and 368–369; that span reads DI. Residues Ala393, Tyr398, and 432-433 each bind UDP-alpha-D-glucuronate; that span reads TS. Catalysis depends on Glu434, which acts as the Proton acceptor; for decarboxylase activity. UDP-alpha-D-glucuronate is bound by residues Arg460, Asn492, 526–535, and Tyr613; that span reads KLIDGGQQKR. Arg619 serves as the catalytic Proton donor; for decarboxylase activity.

In the N-terminal section; belongs to the Fmt family. UDP-L-Ara4N formyltransferase subfamily. The protein in the C-terminal section; belongs to the NAD(P)-dependent epimerase/dehydratase family. UDP-glucuronic acid decarboxylase subfamily. In terms of assembly, homohexamer, formed by a dimer of trimers.

The catalysed reaction is UDP-alpha-D-glucuronate + NAD(+) = UDP-beta-L-threo-pentopyranos-4-ulose + CO2 + NADH. It catalyses the reaction UDP-4-amino-4-deoxy-beta-L-arabinose + (6R)-10-formyltetrahydrofolate = UDP-4-deoxy-4-formamido-beta-L-arabinose + (6S)-5,6,7,8-tetrahydrofolate + H(+). The protein operates within nucleotide-sugar biosynthesis; UDP-4-deoxy-4-formamido-beta-L-arabinose biosynthesis; UDP-4-deoxy-4-formamido-beta-L-arabinose from UDP-alpha-D-glucuronate: step 1/3. It participates in nucleotide-sugar biosynthesis; UDP-4-deoxy-4-formamido-beta-L-arabinose biosynthesis; UDP-4-deoxy-4-formamido-beta-L-arabinose from UDP-alpha-D-glucuronate: step 3/3. Its pathway is bacterial outer membrane biogenesis; lipopolysaccharide biosynthesis. Bifunctional enzyme that catalyzes the oxidative decarboxylation of UDP-glucuronic acid (UDP-GlcUA) to UDP-4-keto-arabinose (UDP-Ara4O) and the addition of a formyl group to UDP-4-amino-4-deoxy-L-arabinose (UDP-L-Ara4N) to form UDP-L-4-formamido-arabinose (UDP-L-Ara4FN). The modified arabinose is attached to lipid A and is required for resistance to polymyxin and cationic antimicrobial peptides. The protein is Bifunctional polymyxin resistance protein ArnA of Salmonella enteritidis PT4 (strain P125109).